A 351-amino-acid polypeptide reads, in one-letter code: Nicotinate-nucleotide--dimethylbenzimidazole phosphoribosyltransferase (351 aa).

The Proton acceptor role is filled by Glu318.

Belongs to the CobT family.

The enzyme catalyses 5,6-dimethylbenzimidazole + nicotinate beta-D-ribonucleotide = alpha-ribazole 5'-phosphate + nicotinate + H(+). It functions in the pathway nucleoside biosynthesis; alpha-ribazole biosynthesis; alpha-ribazole from 5,6-dimethylbenzimidazole: step 1/2. In terms of biological role, catalyzes the synthesis of alpha-ribazole-5'-phosphate from nicotinate mononucleotide (NAMN) and 5,6-dimethylbenzimidazole (DMB). The polypeptide is Nicotinate-nucleotide--dimethylbenzimidazole phosphoribosyltransferase (Chloroflexus aurantiacus (strain ATCC 29366 / DSM 635 / J-10-fl)).